The following is a 592-amino-acid chain: Solute carrier family 13 member 2 (592 aa).

Transmembrane regions (helical) follow at residues 13-33, 53-73, 86-106, and 114-134; these read SYLI…LVPS, ALPL…MGIV, SNLL…WNLH, and LLIV…VTAF. The segment covering 165–177 has biased composition (polar residues); that stretch reads SSNVEEGSNNPTF. A disordered region spans residues 165 to 185; that stretch reads SSNVEEGSNNPTFELQEPSPQ. Helical transmembrane passes span 221–241, 274–294, 324–344, 371–391, 450–470, 482–502, 511–531, and 545–565; these read MSLC…TGTA, MVIL…GFNF, PMTF…LLWF, GTVA…FPGL, PLQS…VATF, IFLP…LYVM, LAFM…FGDL, and IIGV…LFSL.

It belongs to the SLC13A/DASS transporter (TC 2.A.47) family. NADC subfamily. Expressed in kidney and intestine. In kidney expressed in the proximal tubule (at protein level).

The protein resides in the apical cell membrane. It catalyses the reaction succinate(out) + 3 Na(+)(out) = succinate(in) + 3 Na(+)(in). The catalysed reaction is fumarate(out) + 3 Na(+)(out) = fumarate(in) + 3 Na(+)(in). It carries out the reaction 2-oxoglutarate(out) + 3 Na(+)(out) = 2-oxoglutarate(in) + 3 Na(+)(in). With respect to regulation, li(+) decreases succinate transport in the presence of Na(+), by competing at one of the three cation binding sites. In terms of biological role, low-affinity sodium-dicarboxylate cotransporter, that mediates the entry of citric acid cycle intermediates, such as succinate, citrate, fumarate and alpha-ketoglutarate (2-oxoglutarate) into the small intestine and renal proximal tubule. Transports the dicarboxylate into the cell with a probable stoichiometry of 3 Na(+) for 1 divalent dicarboxylate, rendering the process electrogenic. Citrate is transported in protonated form as a divalent anion, rather than the trivalent form which is normally found in blood. Has a critical role in renal dicarboxylate transport. This chain is Solute carrier family 13 member 2 (SLC13A2), found in Homo sapiens (Human).